A 90-amino-acid chain; its full sequence is Evasin P1128 (90 aa).

The signal sequence occupies residues 1-18; it reads MFIALGIQLFVAVTYAAG. Intrachain disulfides connect cysteine 29-cysteine 51, cysteine 33-cysteine 53, and cysteine 44-cysteine 64. An N-linked (GlcNAc...) asparagine glycan is attached at asparagine 32.

Its subcellular location is the secreted. Salivary chemokine-binding protein which binds to host chemokines CXCL1, CXCL2, CXCL3, CXCL5 and CXCL8. This Ixodes ricinus (Common tick) protein is Evasin P1128.